We begin with the raw amino-acid sequence, 714 residues long: MNVIAIMNHMGVYFKEEPIRELHRALEGLNFRIVYPNDREDLLKLIENNSRLCGVIFDWDKYNLELCEEISKLNEYMPLYAFANSYSTLDVSLNDLRMQVRFFEYALGAAADIAAKIRQNTDEYIDNILPPLTKALFKYVREGKYTFCTPGHMGGTAFQKSPVGSIFYDFFGPNTMKSDISISVSELGSLLDHSGPHKEAEEYIARVFNAERSYMVTNGTSTANKIVGMYSAPAGSTVLIDRNCHKSLTHLMMMSDITPIYFRPTRNAYGILGGIPQSEFQHATIAKRVKETPNATWPVHAVITNSTYDGLLYNTDYIKKTLDVKSIHFDSAWVPYTNFSPIYQGKCGMSGDRVEGKIIYETQSTHKLLAAFSQASMIHVKGDINEETFNEAYMMHTTTSPHYGIVASTETAAAMMKGNAGKRLINGSIERAIKFRKEIKRLKSESDGWFFDVWQPEHIDGAECWPLRSDSAWHGFKNIDNEHMYLDPIKVTILTPGMKKDGTMDEFGIPASLVAKYLDERGIIVEKTGPYNLLFLFSIGIDKTKALSLLRALTEFKRAFDLNLRVKNILPALYREAPEFYENMRIQELAQNIHKLVEHHNLPDLMYRAFEVLPKMVMTPYTAFQKELHGETEEVYLEEMVGRVNANMILPYPPGVPLVMPGEMITEESRPVLEFLQMLCEIGAHYPGFETDIHGAYRQADGRYTVKVLKENTK.

An N6-(pyridoxal phosphate)lysine modification is found at K367.

Belongs to the Orn/Lys/Arg decarboxylase class-I family. Homodecamer. Interacts with RavA. Pyridoxal 5'-phosphate is required as a cofactor.

It is found in the cytoplasm. It carries out the reaction L-lysine + H(+) = cadaverine + CO2. In Salmonella typhi, this protein is Inducible lysine decarboxylase (cadA).